The primary structure comprises 287 residues: ATP synthase gamma chain (287 aa).

Belongs to the ATPase gamma chain family. As to quaternary structure, F-type ATPases have 2 components, CF(1) - the catalytic core - and CF(0) - the membrane proton channel. CF(1) has five subunits: alpha(3), beta(3), gamma(1), delta(1), epsilon(1). CF(0) has three main subunits: a, b and c.

The protein localises to the cell inner membrane. Produces ATP from ADP in the presence of a proton gradient across the membrane. The gamma chain is believed to be important in regulating ATPase activity and the flow of protons through the CF(0) complex. This Colwellia maris protein is ATP synthase gamma chain.